We begin with the raw amino-acid sequence, 101 residues long: UPF0235 protein SG2030 (101 aa).

Belongs to the UPF0235 family.

The chain is UPF0235 protein SG2030 from Sodalis glossinidius (strain morsitans).